Here is a 776-residue protein sequence, read N- to C-terminus: Protein STRUBBELIG-RECEPTOR FAMILY 3 (776 aa).

A signal peptide spans 1–29 (MAAKRSIYCLLLLPLLLSLLIWIPSISLA). Over 30–35 (ATNPDD) the chain is Cytoplasmic. The helical transmembrane segment at 36–56 (VAAINGLFAALGAPVLPGWIA) threads the bilayer. Residues 57-316 (SGGDPCGEAW…KGKNSSHTKK (260 aa)) are Extracellular-facing. A glycan (N-linked (GlcNAc...) asparagine) is linked at Asn-72. LRR repeat units lie at residues 99 to 120 (SIRG…TLPV), 121 to 143 (TLQH…LGTL), 145 to 167 (FLND…FQNL), 169 to 191 (GLIN…MENL), 193 to 215 (TLTT…QGLP), and 216 to 236 (LQDL…KLLS). An N-linked (GlcNAc...) asparagine glycan is attached at Asn-179. 2 N-linked (GlcNAc...) asparagine glycosylation sites follow: Asn-248 and Asn-253. Positions 251–311 (MINSTSTAPS…SSENSKGKNS (61 aa)) are disordered. A compositionally biased stretch (low complexity) spans 254-268 (STSTAPSLSPSLSPT). The span at 269 to 284 (KPAPTRPFSGVPPPPN) shows a compositional bias: pro residues. The segment covering 298–309 (SEGSSSENSKGK) has biased composition (low complexity). The N-linked (GlcNAc...) asparagine glycan is linked to Asn-310. Residues 317 to 337 (IILIAFAGVLVFIILVLAILL) traverse the membrane as a helical segment. Residues 338–776 (LLPKCARRRE…RHGSGDSTAD (439 aa)) are Cytoplasmic-facing. The disordered stretch occupies residues 355–440 (PHQVGADRGS…PPPPPPPPPP (86 aa)). Residues 381–407 (RSEKVQREPFKKAGEEPKVLHDLERLR) show a composition bias toward basic and acidic residues. Residues 426–440 (MPPPPPPPPPPPPPP) are compositionally biased toward pro residues. Positions 485 to 763 (FAQENLIGSG…EVVQDLLDMI (279 aa)) constitute a Protein kinase domain. ATP is bound by residues 491 to 499 (IGSGMLGSV) and Lys-513.

Belongs to the protein kinase superfamily. Ser/Thr protein kinase family. In terms of tissue distribution, expressed in seedlings, roots, stems, leaves, flowers and siliques.

It is found in the membrane. Not essential for epidermal patterning and not redundant with STRUBBELIG. The polypeptide is Protein STRUBBELIG-RECEPTOR FAMILY 3 (SRF3) (Arabidopsis thaliana (Mouse-ear cress)).